Here is a 364-residue protein sequence, read N- to C-terminus: Dual-specificity RNA methyltransferase RlmN (364 aa).

The active-site Proton acceptor is the glutamate 91. The region spanning 97–333 is the Radical SAM core domain; the sequence is ESDRGTLCIS…VTVRKTRGDD (237 aa). A disulfide bond links cysteine 104 and cysteine 338. The [4Fe-4S] cluster site is built by cysteine 111, cysteine 115, and cysteine 118. S-adenosyl-L-methionine is bound by residues 164-165, serine 196, 218-220, and asparagine 295; these read GE and SLH. Cysteine 338 functions as the S-methylcysteine intermediate in the catalytic mechanism.

It belongs to the radical SAM superfamily. RlmN family. Requires [4Fe-4S] cluster as cofactor.

The protein localises to the cytoplasm. It carries out the reaction adenosine(2503) in 23S rRNA + 2 reduced [2Fe-2S]-[ferredoxin] + 2 S-adenosyl-L-methionine = 2-methyladenosine(2503) in 23S rRNA + 5'-deoxyadenosine + L-methionine + 2 oxidized [2Fe-2S]-[ferredoxin] + S-adenosyl-L-homocysteine. The enzyme catalyses adenosine(37) in tRNA + 2 reduced [2Fe-2S]-[ferredoxin] + 2 S-adenosyl-L-methionine = 2-methyladenosine(37) in tRNA + 5'-deoxyadenosine + L-methionine + 2 oxidized [2Fe-2S]-[ferredoxin] + S-adenosyl-L-homocysteine. Its function is as follows. Specifically methylates position 2 of adenine 2503 in 23S rRNA and position 2 of adenine 37 in tRNAs. m2A2503 modification seems to play a crucial role in the proofreading step occurring at the peptidyl transferase center and thus would serve to optimize ribosomal fidelity. This is Dual-specificity RNA methyltransferase RlmN from Neisseria gonorrhoeae (strain ATCC 700825 / FA 1090).